The sequence spans 611 residues: Dihydroxy-acid dehydratase (611 aa).

Position 81 (Asp81) interacts with Mg(2+). A [2Fe-2S] cluster-binding site is contributed by Cys122. Mg(2+) is bound by residues Asp123 and Lys124. An N6-carboxylysine modification is found at Lys124. Cys195 lines the [2Fe-2S] cluster pocket. Residue Glu491 coordinates Mg(2+). Residue Ser517 is the Proton acceptor of the active site.

It belongs to the IlvD/Edd family. As to quaternary structure, homodimer. [2Fe-2S] cluster is required as a cofactor. It depends on Mg(2+) as a cofactor.

It carries out the reaction (2R)-2,3-dihydroxy-3-methylbutanoate = 3-methyl-2-oxobutanoate + H2O. It catalyses the reaction (2R,3R)-2,3-dihydroxy-3-methylpentanoate = (S)-3-methyl-2-oxopentanoate + H2O. The protein operates within amino-acid biosynthesis; L-isoleucine biosynthesis; L-isoleucine from 2-oxobutanoate: step 3/4. It functions in the pathway amino-acid biosynthesis; L-valine biosynthesis; L-valine from pyruvate: step 3/4. In terms of biological role, functions in the biosynthesis of branched-chain amino acids. Catalyzes the dehydration of (2R,3R)-2,3-dihydroxy-3-methylpentanoate (2,3-dihydroxy-3-methylvalerate) into 2-oxo-3-methylpentanoate (2-oxo-3-methylvalerate) and of (2R)-2,3-dihydroxy-3-methylbutanoate (2,3-dihydroxyisovalerate) into 2-oxo-3-methylbutanoate (2-oxoisovalerate), the penultimate precursor to L-isoleucine and L-valine, respectively. This Pasteurella multocida (strain Pm70) protein is Dihydroxy-acid dehydratase.